A 155-amino-acid chain; its full sequence is Ribonuclease H (155 aa).

In terms of domain architecture, RNase H type-1 spans 4–145 (TEPTVYAYTD…ADRLANRGID (142 aa)). Positions 13, 51, 73, and 137 each coordinate Mg(2+).

Belongs to the RNase H family. Monomer. Mg(2+) is required as a cofactor.

Its subcellular location is the cytoplasm. The enzyme catalyses Endonucleolytic cleavage to 5'-phosphomonoester.. Endonuclease that specifically degrades the RNA of RNA-DNA hybrids. The protein is Ribonuclease H of Methylococcus capsulatus (strain ATCC 33009 / NCIMB 11132 / Bath).